The following is a 247-amino-acid chain: Carboxy-S-adenosyl-L-methionine synthase (247 aa).

S-adenosyl-L-methionine is bound by residues Tyr39, 64 to 66 (GCS), 89 to 90 (DN), 117 to 118 (DI), Asn132, and Arg199.

Belongs to the class I-like SAM-binding methyltransferase superfamily. Cx-SAM synthase family. In terms of assembly, homodimer.

It carries out the reaction prephenate + S-adenosyl-L-methionine = carboxy-S-adenosyl-L-methionine + 3-phenylpyruvate + H2O. Catalyzes the conversion of S-adenosyl-L-methionine (SAM) to carboxy-S-adenosyl-L-methionine (Cx-SAM). The chain is Carboxy-S-adenosyl-L-methionine synthase from Escherichia coli O7:K1 (strain IAI39 / ExPEC).